Here is a 137-residue protein sequence, read N- to C-terminus: MADTKTATPATDAEEATATPPAAAPSSEAYAIVEASGTQMWVQANRYYDVDRLHAEVDETIKLENVLMVKDSKGTTLGQPFVKDATVALKVMAHRRGPKVIVYKMRPKKKTRRKNGHRQELTRVMVESITVGGKAIS.

The interval 1–26 is disordered; the sequence is MADTKTATPATDAEEATATPPAAAPS.

This sequence belongs to the bacterial ribosomal protein bL21 family. Part of the 50S ribosomal subunit. Contacts protein L20.

Functionally, this protein binds to 23S rRNA in the presence of protein L20. This chain is Large ribosomal subunit protein bL21, found in Parasynechococcus marenigrum (strain WH8102).